Reading from the N-terminus, the 313-residue chain is Formimidoylglutamase (313 aa).

Residues H130, D155, H157, D159, D241, and D243 each coordinate Mn(2+).

It belongs to the arginase family. The cofactor is Mn(2+).

The catalysed reaction is N-formimidoyl-L-glutamate + H2O = formamide + L-glutamate. It functions in the pathway amino-acid degradation; L-histidine degradation into L-glutamate; L-glutamate from N-formimidoyl-L-glutamate (hydrolase route): step 1/1. In terms of biological role, catalyzes the conversion of N-formimidoyl-L-glutamate to L-glutamate and formamide. The polypeptide is Formimidoylglutamase (Salmonella agona (strain SL483)).